Consider the following 101-residue polypeptide: Small ribosomal subunit protein bS18c (101 aa).

Basic residues predominate over residues 1 to 19 (MNKSKRPFTKSKRSFRRRL). Residues 1-23 (MNKSKRPFTKSKRSFRRRLPPIQ) are disordered.

It belongs to the bacterial ribosomal protein bS18 family. In terms of assembly, part of the 30S ribosomal subunit.

It is found in the plastid. Its subcellular location is the chloroplast. This Lobularia maritima (Sweet alyssum) protein is Small ribosomal subunit protein bS18c.